Reading from the N-terminus, the 134-residue chain is Holo-[acyl-carrier-protein] synthase (134 aa).

D8 and E57 together coordinate Mg(2+).

It belongs to the P-Pant transferase superfamily. AcpS family. The cofactor is Mg(2+).

The protein resides in the cytoplasm. The enzyme catalyses apo-[ACP] + CoA = holo-[ACP] + adenosine 3',5'-bisphosphate + H(+). Functionally, transfers the 4'-phosphopantetheine moiety from coenzyme A to a Ser of acyl-carrier-protein. The chain is Holo-[acyl-carrier-protein] synthase from Rhizobium johnstonii (strain DSM 114642 / LMG 32736 / 3841) (Rhizobium leguminosarum bv. viciae).